Here is a 329-residue protein sequence, read N- to C-terminus: Glucosyl-3-phosphoglycerate synthase (329 aa).

Residues 55-59 (PALDE), Ser86, Lys119, and 139-141 (DSD) each bind UDP-alpha-D-glucose. Asp141 provides a ligand contact to Mn(2+). 189-192 (GRVT) provides a ligand contact to (2R)-3-phosphoglycerate. Residue 234-237 (YGVE) coordinates UDP-alpha-D-glucose. Position 263 (His263) interacts with Mn(2+). Asn265 contributes to the (2R)-3-phosphoglycerate binding site.

The protein belongs to the glycosyltransferase 2 family. Homodimer. It depends on Mg(2+) as a cofactor. Mn(2+) is required as a cofactor.

It catalyses the reaction an NDP-alpha-D-glucose + (2R)-3-phosphoglycerate = (2R)-2-O-(alpha-D-glucopyranosyl)-3-phospho-glycerate + a ribonucleoside 5'-diphosphate + H(+). The catalysed reaction is (2R)-3-phosphoglycerate + UDP-alpha-D-glucose = (2R)-2-O-(alpha-D-glucopyranosyl)-3-phospho-glycerate + UDP + H(+). The enzyme catalyses GDP-D-glucose + (2R)-3-phosphoglycerate = (2R)-2-O-(alpha-D-glucopyranosyl)-3-phospho-glycerate + GDP + H(+). Involved in the biosynthesis of 6-O-methylglucose lipopolysaccarides (MGLPs). Catalyzes the transfer of the glucose moiety from UDP-alpha-D-glucose (UDP-Glc) to the position 2 of 3-phospho-D-glycerate (3-PGA) to form glucosyl-3-phosphoglycerate (GPG). To a lesser extent can also use GDP-Glc but not UDP-Gal or UDP-GlcNAc as the sugar donor. This chain is Glucosyl-3-phosphoglycerate synthase, found in Mycolicibacterium paratuberculosis (strain ATCC BAA-968 / K-10) (Mycobacterium paratuberculosis).